Consider the following 233-residue polypeptide: 2-C-methyl-D-erythritol 4-phosphate cytidylyltransferase (233 aa).

This sequence belongs to the IspD/TarI cytidylyltransferase family. IspD subfamily.

The catalysed reaction is 2-C-methyl-D-erythritol 4-phosphate + CTP + H(+) = 4-CDP-2-C-methyl-D-erythritol + diphosphate. The protein operates within isoprenoid biosynthesis; isopentenyl diphosphate biosynthesis via DXP pathway; isopentenyl diphosphate from 1-deoxy-D-xylulose 5-phosphate: step 2/6. Catalyzes the formation of 4-diphosphocytidyl-2-C-methyl-D-erythritol from CTP and 2-C-methyl-D-erythritol 4-phosphate (MEP). This chain is 2-C-methyl-D-erythritol 4-phosphate cytidylyltransferase, found in Geotalea uraniireducens (strain Rf4) (Geobacter uraniireducens).